We begin with the raw amino-acid sequence, 229 residues long: Matrix protein (229 aa).

The short motif at 2 to 4 (QRL) is the dynamin binding element. The PPXY motif signature appears at 30 to 33 (PPSY). A PTAP/PSAP motif motif is present at residues 42 to 45 (PTAP).

The protein belongs to the vesiculoviruses matrix protein family. Homomultimer. Interacts with viral nucleocapsid; this interaction contributes to the virion assembly. Interacts with the viral envelope glycoprotein; this interaction contributes to the virion assembly. Interacts with host RAE1-NUP98 complex. Interacts with host NEDD4 and TSG101. Interacts with host dynamin. Interacts with host NDUFAF4; the interaction inhibits viral propagation and is independent of interferon activation. Interacts with host GTF2H5; the interaction may inhibit host transcription. Interacts with host DRG1. Interaction with host CTDNEP1. Interaction with host ABCE1. In terms of processing, phosphorylated by host.

It is found in the virion. It localises to the host endomembrane system. The protein resides in the host nucleus membrane. Its subcellular location is the host nucleus. The protein localises to the host cytoplasm. Functionally, forms a double layer around the helical nucleocapsid, the inner matrix layer binding to the N helix and the outer matrix layer binding to the envelope glycoprotein. Plays a major role in assembly and budding of virion, by recruiting cellular partners of the ESCRT complexes that play a key role in releasing the budding particle from the host membrane. Condensates the ribonucleocapsid core during virus assembly. Inhibits the host mRNA nuclear export thereby inducing the shut off of cellular transcription and preventing the interferon signaling and the establishment of antiviral state in infected cells. This shutoff presumably inhibits interferon signaling and thus establishment of antiviral state in virus infected cells. Induces cell-rounding, cytoskeleton disorganization and apoptosis in infected cell. Inhibits host transcription, possibly through interaction with host DNA repair factor IIH/TFIIH GTF2H5 subunit. The sequence is that of Matrix protein (M) from Homo sapiens (Human).